We begin with the raw amino-acid sequence, 231 residues long: Large ribosomal subunit protein uL3 (231 aa).

Gln151 carries the N5-methylglutamine modification.

This sequence belongs to the universal ribosomal protein uL3 family. As to quaternary structure, part of the 50S ribosomal subunit. Forms a cluster with proteins L14 and L19. Methylated by PrmB.

In terms of biological role, one of the primary rRNA binding proteins, it binds directly near the 3'-end of the 23S rRNA, where it nucleates assembly of the 50S subunit. The sequence is that of Large ribosomal subunit protein uL3 from Granulibacter bethesdensis (strain ATCC BAA-1260 / CGDNIH1).